The following is a 384-amino-acid chain: Cytochrome b (384 aa).

4 helical membrane passes run Phe32–Ile52, Trp76–Ser98, Thr113–Val133, and Phe179–Ala199. The heme b site is built by His82 and His96. Residues His183 and His197 each contribute to the heme b site. His202 is an a ubiquinone binding site. The next 4 membrane-spanning stretches (helical) occupy residues Phe225 to Tyr245, Leu289 to Thr309, Leu321 to Gly341, and Tyr348 to Pro368.

It belongs to the cytochrome b family. As to quaternary structure, the main subunits of complex b-c1 are: cytochrome b, cytochrome c1 and the Rieske protein. The cofactor is heme b.

The protein resides in the mitochondrion inner membrane. Its function is as follows. Component of the ubiquinol-cytochrome c reductase complex (complex III or cytochrome b-c1 complex) that is part of the mitochondrial respiratory chain. The b-c1 complex mediates electron transfer from ubiquinol to cytochrome c. Contributes to the generation of a proton gradient across the mitochondrial membrane that is then used for ATP synthesis. This Cyanidium caldarium (Red alga) protein is Cytochrome b (MT-CYB).